A 147-amino-acid polypeptide reads, in one-letter code: Protein-export protein SecB (147 aa).

This sequence belongs to the SecB family. Homotetramer, a dimer of dimers. One homotetramer interacts with 1 SecA dimer.

It is found in the cytoplasm. One of the proteins required for the normal export of preproteins out of the cell cytoplasm. It is a molecular chaperone that binds to a subset of precursor proteins, maintaining them in a translocation-competent state. It also specifically binds to its receptor SecA. This Neisseria gonorrhoeae (strain ATCC 700825 / FA 1090) protein is Protein-export protein SecB.